Consider the following 78-residue polypeptide: Short neurotoxin SNTX14 (78 aa).

The N-terminal stretch at 1-21 is a signal peptide; that stretch reads MKTLLLTFLVVTIVCLDLGYT. Disulfide bonds link cysteine 24-cysteine 40, cysteine 33-cysteine 58, cysteine 62-cysteine 70, and cysteine 71-cysteine 76.

Belongs to the three-finger toxin family. Short-chain subfamily. As to expression, expressed by the venom gland.

It localises to the secreted. Its function is as follows. This three-finger toxin binds and inhibits the nicotinic acetylcholine receptor (nAChR). The protein is Short neurotoxin SNTX14 of Ophiophagus hannah (King cobra).